A 311-amino-acid polypeptide reads, in one-letter code: Manganese-dependent inorganic pyrophosphatase (311 aa).

The Mn(2+) site is built by His10, Asp14, Asp16, Asp75, His97, and Asp149.

It belongs to the PPase class C family. As to quaternary structure, homodimer. The cofactor is Mn(2+).

The catalysed reaction is diphosphate + H2O = 2 phosphate + H(+). The sequence is that of Manganese-dependent inorganic pyrophosphatase (ppaC) from Methanothrix thermoacetophila (strain DSM 6194 / JCM 14653 / NBRC 101360 / PT) (Methanosaeta thermophila).